Reading from the N-terminus, the 774-residue chain is Mastermind-like domain-containing protein 1 (774 aa).

Disordered regions lie at residues 257 to 279 (STGI…SSMA), 310 to 365 (LAAS…PQSL), 386 to 421 (ALLS…QPQF), 442 to 473 (HLMS…QQSF), 525 to 609 (GMAS…QPDH), 656 to 678 (PQHQ…VSPS), and 755 to 774 (LPSC…GNDP). A compositionally biased stretch (pro residues) spans 331-361 (LPPPGLSPPYRPVPSPHPPPLPLPPPPPPFS). Over residues 386 to 397 (ALLSSMTSSSNA) the composition is skewed to polar residues. Over residues 574–609 (QQPTPTQASSATASSTATATLQLQQQQQQQQQQPDH) the composition is skewed to low complexity. Positions 656 to 669 (PQHQHGNSFTSRQD) are enriched in polar residues. Serine 676 carries the post-translational modification Phosphoserine.

The protein belongs to the mastermind family. In terms of tissue distribution, expressed in fetal brain, fetal ovary and fetal testis. Expressed in adult brain, ovary, skin, testis, uterus. Highly expressed in skeletal muscle.

Its subcellular location is the nucleus. Transactivates the HES3 promoter independently of NOTCH proteins. HES3 is a non-canonical NOTCH target gene which lacks binding sites for RBPJ. This is Mastermind-like domain-containing protein 1 (MAMLD1) from Homo sapiens (Human).